A 159-amino-acid chain; its full sequence is Ribosome maturation factor RimP (159 aa).

It belongs to the RimP family.

It is found in the cytoplasm. Required for maturation of 30S ribosomal subunits. This is Ribosome maturation factor RimP from Geobacter sulfurreducens (strain ATCC 51573 / DSM 12127 / PCA).